The chain runs to 248 residues: 14-3-3-like protein 2 (248 aa).

It belongs to the 14-3-3 family. As to quaternary structure, interacts with daf-16. Interacts with sir-2.1. Interacts with hcf-1.

It localises to the cytoplasm. It is found in the nucleus. Its function is as follows. Required for extension of lifespan by sir-2.1. Required to modulate lifespan, in concert with hcf-1, acting redundantly with 14-3-3-like protein par-5. Promotes nuclear export of yap-1. Negatively regulates the transcriptional activity of daf-16 by sequestering it to the cytoplasm. This Caenorhabditis elegans protein is 14-3-3-like protein 2.